Consider the following 141-residue polypeptide: NADH dehydrogenase [ubiquinone] 1 alpha subcomplex subunit 11 (141 aa).

2 helical membrane-spanning segments follow: residues 21–43 (KTYI…RVSL) and 58–80 (RYTF…SAQV).

It belongs to the complex I NDUFA11 subunit family. As to quaternary structure, complex I is composed of 45 different subunits.

Its subcellular location is the mitochondrion inner membrane. Accessory subunit of the mitochondrial membrane respiratory chain NADH dehydrogenase (Complex I), that is believed not to be involved in catalysis. Complex I functions in the transfer of electrons from NADH to the respiratory chain. The immediate electron acceptor for the enzyme is believed to be ubiquinone. The sequence is that of NADH dehydrogenase [ubiquinone] 1 alpha subcomplex subunit 11 (Ndufa11) from Mus musculus (Mouse).